A 397-amino-acid polypeptide reads, in one-letter code: S-adenosylmethionine:tRNA ribosyltransferase-isomerase (397 aa).

Belongs to the QueA family. In terms of assembly, monomer.

It localises to the cytoplasm. The enzyme catalyses 7-aminomethyl-7-carbaguanosine(34) in tRNA + S-adenosyl-L-methionine = epoxyqueuosine(34) in tRNA + adenine + L-methionine + 2 H(+). It functions in the pathway tRNA modification; tRNA-queuosine biosynthesis. Functionally, transfers and isomerizes the ribose moiety from AdoMet to the 7-aminomethyl group of 7-deazaguanine (preQ1-tRNA) to give epoxyqueuosine (oQ-tRNA). In Nostoc sp. (strain PCC 7120 / SAG 25.82 / UTEX 2576), this protein is S-adenosylmethionine:tRNA ribosyltransferase-isomerase.